We begin with the raw amino-acid sequence, 335 residues long: Ornithine carbamoyltransferase (335 aa).

Residues 57 to 60, R108, and 135 to 138 each bind carbamoyl phosphate; these read STRT and HPTQ. L-ornithine contacts are provided by residues N168, D232, and 236 to 237; that span reads SM. Residues 274–275 and R319 each bind carbamoyl phosphate; that span reads CL.

Belongs to the aspartate/ornithine carbamoyltransferase superfamily. OTCase family.

It is found in the cytoplasm. The enzyme catalyses carbamoyl phosphate + L-ornithine = L-citrulline + phosphate + H(+). It functions in the pathway amino-acid degradation; L-arginine degradation via ADI pathway; carbamoyl phosphate from L-arginine: step 2/2. Its function is as follows. Reversibly catalyzes the transfer of the carbamoyl group from carbamoyl phosphate (CP) to the N(epsilon) atom of ornithine (ORN) to produce L-citrulline. In Limosilactobacillus reuteri (strain DSM 20016) (Lactobacillus reuteri), this protein is Ornithine carbamoyltransferase.